The primary structure comprises 547 residues: Serine/threonine-protein kinase RIO2 (547 aa).

A Protein kinase domain is found at 97-273; sequence VGNQMGVGKE…RDVKCIREFF (177 aa). Position 123 (lysine 123) interacts with ATP. Aspartate 228 serves as the catalytic Proton acceptor. Residues serine 332, serine 337, serine 350, serine 362, serine 385, and serine 390 each carry the phosphoserine modification. The tract at residues 352 to 385 is disordered; the sequence is LEKEADPADESGGSWCCSSTDSKQIKDGGLPEES. Residues 399–408 carry the Nuclear export signal motif; the sequence is AVEEMERQVL. Residues 404–445 are disordered; that stretch reads ERQVLPHRSVTEFSEESRRTENDGQPGQRSPAGSEDCDDEPP. Serine 412, serine 417, serine 433, serine 437, and serine 543 each carry phosphoserine.

This sequence belongs to the protein kinase superfamily. RIO-type Ser/Thr kinase family. As to quaternary structure, associated with late 40S pre-ribosomal particles. Interacts with PLK1 (via its N-terminus). It depends on Mg(2+) as a cofactor. Post-translationally, autophosphorylated (in vitro). Phosphorylation affects the timing of the metaphase-anaphase transition.

It localises to the cytoplasm. The enzyme catalyses L-seryl-[protein] + ATP = O-phospho-L-seryl-[protein] + ADP + H(+). It catalyses the reaction L-threonyl-[protein] + ATP = O-phospho-L-threonyl-[protein] + ADP + H(+). In terms of biological role, serine/threonine-protein kinase involved in the final steps of cytoplasmic maturation of the 40S ribosomal subunit. Involved in export of the 40S pre-ribosome particles (pre-40S) from the nucleus to the cytoplasm. Its kinase activity is required for the release of NOB1, PNO1 and LTV1 from the late pre-40S and the processing of 18S-E pre-rRNA to the mature 18S rRNA. May regulate the timing of the metaphase-anaphase transition during mitotic progression, and its phosphorylation, may regulate this function. The sequence is that of Serine/threonine-protein kinase RIO2 (Riok2) from Mus musculus (Mouse).